The following is a 447-amino-acid chain: Phosphoglucosamine mutase (447 aa).

Ser-104 functions as the Phosphoserine intermediate in the catalytic mechanism. Ser-104, Asp-243, Asp-245, and Asp-247 together coordinate Mg(2+). Ser-104 carries the post-translational modification Phosphoserine.

The protein belongs to the phosphohexose mutase family. It depends on Mg(2+) as a cofactor. Activated by phosphorylation.

The catalysed reaction is alpha-D-glucosamine 1-phosphate = D-glucosamine 6-phosphate. Functionally, catalyzes the conversion of glucosamine-6-phosphate to glucosamine-1-phosphate. This Corynebacterium diphtheriae (strain ATCC 700971 / NCTC 13129 / Biotype gravis) protein is Phosphoglucosamine mutase.